The sequence spans 270 residues: Cystinosin homolog (270 aa).

The PQ-loop 1 domain maps to 9 to 75 (LEISYEIVGW…LYFSPVIQKQ (67 aa)). A helical membrane pass occupies residues 14-34 (EIVGWIAFASWSISFYPQLIL). Residue N52 is glycosylated (N-linked (GlcNAc...) asparagine). 3 consecutive transmembrane segments (helical) span residues 93 to 113 (VAFS…IFIY), 123 to 143 (LAIG…FIAL), and 148 to 168 (WLWL…VKYI). The PQ-loop 2 domain maps to 151-213 (LISIFNSIQV…IQSIDQNSWK (63 aa)). Residue N174 is glycosylated (N-linked (GlcNAc...) asparagine). 2 helical membrane passes run 180–200 (TVGW…ANYL) and 223–243 (LLSL…YVLY). The disordered stretch occupies residues 250-270 (KSPETGEESNEPLIDSSHEHV).

It belongs to the cystinosin (TC 2.A.43.1) family.

The protein localises to the lysosome membrane. Its function is as follows. Thought to transport cystine out of lysosomes. In Arabidopsis thaliana (Mouse-ear cress), this protein is Cystinosin homolog.